The sequence spans 165 residues: Pro-MCH (165 aa).

An N-terminal signal peptide occupies residues 1–21 (MAKMSLSSYMLMLAFSLFSHG). Basic and acidic residues predominate over residues 69–82 (DESGFMKDDDDKTT). The segment at 69–89 (DESGFMKDDDDKTTKNTGSKQ) is disordered. I143 bears the Isoleucine amide mark. C153 and C162 are joined by a disulfide.

Belongs to the melanin-concentrating hormone family. In terms of processing, pro-MCH is processed differentially in the brain and in peripheral organs producing two neuropeptides; NEI and MCH. A third peptide, NGE, may also be produced. Preferential processing in neurons by prohormone convertase 2 (PC2) generates NEI. MCH is generated in neurons of the lateral hypothalmic area by several prohormone convertases including PC1/3, PC2 and PC5/6. In terms of tissue distribution, MCH is present in all regions of the brain and in neurointermediate lobe of the pituarity gland, with highest concentrations in the hypothalamus. Also expressed to a much lesser extent in stomach, lamina propria of both duodenum and colon, ovary, thymus, pancreas, adrenal gland and testis (spermatogonia, early spermatocytes and Sertoli cells). Weak expression in heart and lung. The other peptides are expressed at least in Sertoli cells, nei being also expressed in brain, stomach and proximal duodenum. In brain exclusively mature mch and nei peptides are present. In peripheral tissues a large product, encompassing the NEI and MCH domains of the precursor, is found predominantly. At low levels fully processed MCH and NEI peptides are present in gut. No expression in peripheral blood.

It localises to the secreted. In terms of biological role, MCH inhibits ACTH secretion at the end of the light on period which corresponds to the peak of the circadian rhythm in ACTH. Inhibits also stress induced ACTH release during the light off period of the cycle. Involved as a neurotransmitter or neuromodulator in a broad array of neuronal functions. Stimulates sexual behavior when injected into the ventromedial nucleus, this effect is antagonized by NEI. In the medial preoptic area, stimulates anxiety and sexual behavior. Antagonizes inhibitory effect of melanotropin alpha on exploration behavior. Its function is as follows. NEI can influence differentiation of neuronal processes in brain neurons. Affects the content of neurofilament protein in neuritogenesis (in vitro). May also be a neuromodulatory factor. In behavioral tests, it stimulates exploration and anxiety when injected into the ventromedial nucleus. Also stimulates grooming, locomotion and rearing. May antagonize the inhibitory effect of mch on ACTH release. Reduces dopamine and dopac release in the ventromedial nucleus. The polypeptide is Pro-MCH (Pmch) (Rattus norvegicus (Rat)).